The primary structure comprises 234 residues: Phosphoribosylaminoimidazole-succinocarboxamide synthase (234 aa).

It belongs to the SAICAR synthetase family.

The enzyme catalyses 5-amino-1-(5-phospho-D-ribosyl)imidazole-4-carboxylate + L-aspartate + ATP = (2S)-2-[5-amino-1-(5-phospho-beta-D-ribosyl)imidazole-4-carboxamido]succinate + ADP + phosphate + 2 H(+). The protein operates within purine metabolism; IMP biosynthesis via de novo pathway; 5-amino-1-(5-phospho-D-ribosyl)imidazole-4-carboxamide from 5-amino-1-(5-phospho-D-ribosyl)imidazole-4-carboxylate: step 1/2. In Clostridium botulinum (strain Loch Maree / Type A3), this protein is Phosphoribosylaminoimidazole-succinocarboxamide synthase.